We begin with the raw amino-acid sequence, 587 residues long: Cyclic di-GMP phosphodiesterase PA2567 (587 aa).

Residues aspartate 28–alanine 157 form the GAF domain. Positions glycine 192–proline 327 constitute a GGDEF domain. The region spanning alanine 335–arginine 587 is the EAL domain.

The enzyme catalyses 3',3'-c-di-GMP + H2O = 5'-phosphoguanylyl(3'-&gt;5')guanosine + H(+). Functionally, phosphodiesterase (PDE) that catalyzes the hydrolysis of cyclic diguanylate (c-di-GMP) to 5'-pGpG. This chain is Cyclic di-GMP phosphodiesterase PA2567, found in Pseudomonas aeruginosa (strain ATCC 15692 / DSM 22644 / CIP 104116 / JCM 14847 / LMG 12228 / 1C / PRS 101 / PAO1).